Consider the following 147-residue polypeptide: Cytochrome c-type biogenesis protein CcmE 1 (147 aa).

Residues 1–9 (MKSLKKQRR) lie on the Cytoplasmic side of the membrane. Residues 10–30 (IQVIILATVALVLATGLIGYA) traverse the membrane as a helical; Signal-anchor for type II membrane protein segment. At 31-147 (MRDGINFFRA…EQGVYQAPES (117 aa)) the chain is on the periplasmic side. Heme-binding residues include histidine 123 and tyrosine 127.

Belongs to the CcmE/CycJ family.

Its subcellular location is the cell inner membrane. In terms of biological role, heme chaperone required for the biogenesis of c-type cytochromes. Transiently binds heme delivered by CcmC and transfers the heme to apo-cytochromes in a process facilitated by CcmF and CcmH. This is Cytochrome c-type biogenesis protein CcmE 1 from Ruegeria pomeroyi (strain ATCC 700808 / DSM 15171 / DSS-3) (Silicibacter pomeroyi).